A 142-amino-acid polypeptide reads, in one-letter code: Transcriptional regulator MraZ (142 aa).

2 consecutive SpoVT-AbrB domains span residues 5-51 and 77-120; these read ASAL…PRPE and AMDV…DSQT.

Belongs to the MraZ family. As to quaternary structure, forms oligomers.

The protein localises to the cytoplasm. The protein resides in the nucleoid. This chain is Transcriptional regulator MraZ, found in Burkholderia cenocepacia (strain HI2424).